Here is a 116-residue protein sequence, read N- to C-terminus: NADPH-dependent 7-cyano-7-deazaguanine reductase (116 aa).

Cys-31 (thioimide intermediate) is an active-site residue. Asp-38 serves as the catalytic Proton donor. Residues 53–55 and 72–73 contribute to the substrate site; these read IEL and YE.

It belongs to the GTP cyclohydrolase I family. QueF type 1 subfamily.

The protein resides in the cytoplasm. The enzyme catalyses 7-aminomethyl-7-carbaguanine + 2 NADP(+) = 7-cyano-7-deazaguanine + 2 NADPH + 3 H(+). It participates in tRNA modification; tRNA-queuosine biosynthesis. In terms of biological role, catalyzes the NADPH-dependent reduction of 7-cyano-7-deazaguanine (preQ0) to 7-aminomethyl-7-deazaguanine (preQ1). The polypeptide is NADPH-dependent 7-cyano-7-deazaguanine reductase (Chlorobaculum parvum (strain DSM 263 / NCIMB 8327) (Chlorobium vibrioforme subsp. thiosulfatophilum)).